Reading from the N-terminus, the 170-residue chain is uncharacterized protein (170 aa).

A coiled-coil region spans residues 15-81 (EAFDEKAEKE…EREKSKSAVS (67 aa)). Over residues 20–77 (KAEKEKVEKEKALKEKTEKEKAEKEKAEKEKVEKEKAEKEKAAKEKAAKEKAEREKSK) the composition is skewed to basic and acidic residues. The tract at residues 20–95 (KAEKEKVEKE…NQNSNKGNVE (76 aa)) is disordered. Over residues 78–92 (SAVSPATTNQNSNKG) the composition is skewed to polar residues. A helical transmembrane segment spans residues 98 to 118 (VAIGVLAGGAVTGVAVGGAYL).

It is found in the membrane. This is an uncharacterized protein from Dictyostelium discoideum (Social amoeba).